Here is a 626-residue protein sequence, read N- to C-terminus: Glyco-Gag protein (626 aa).

Over 1-67 the chain is Cytoplasmic; sequence LGDVPGTSGA…VWSRSRAARP (67 aa). A helical membrane pass occupies residues 68–86; it reads VCCSIVLCCFCLTVFLYLS. Topologically, residues 87–626 are extracellular; the sequence is ENMGQTATTP…PQASLLTLDD (540 aa). The N-linked (GlcNAc...) asparagine; by host glycan is linked to Asn113. 2 stretches are compositionally biased toward pro residues: residues 199–212 and 249–261; these read PSAPSLPPEPPLST and DPPPYRDPGPPSP. Positions 199–306 are disordered; sequence PSAPSLPPEP…STTSQAFPLR (108 aa). A glycan (N-linked (GlcNAc...) asparagine; by host) is linked at Asn480. 2 stretches are compositionally biased toward basic and acidic residues: residues 522 to 554 and 574 to 607; these read RETPEEREERVRRETEEKEERRRAEDERREKER and RQDRQGGERRRPQLDHDQCAYCKEKGHWARDCPK. The segment at 522 to 626 is disordered; sequence RETPEEREER…PQASLLTLDD (105 aa). Residues 590-607 form a CCHC-type zinc finger; it reads DQCAYCKEKGHWARDCPK.

In terms of processing, glycosylated by host. Cleaved by host near the middle of the molecule, releasing the c-terminal half containing capsid and nucleoprotein domains op GAG.

It localises to the host cell membrane. In terms of biological role, plays a role in viral particle release. Presumably acts by facilitating the fission of the virion bud at the cell surface. May prevent the antiviral activity of murine APOBEC3. In Mus musculus (Mouse), this protein is Glyco-Gag protein.